The chain runs to 137 residues: ATP synthase epsilon chain (137 aa).

The protein belongs to the ATPase epsilon chain family. As to quaternary structure, F-type ATPases have 2 components, CF(1) - the catalytic core - and CF(0) - the membrane proton channel. CF(1) has five subunits: alpha(3), beta(3), gamma(1), delta(1), epsilon(1). CF(0) has three main subunits: a, b and c.

It is found in the cell membrane. Produces ATP from ADP in the presence of a proton gradient across the membrane. The protein is ATP synthase epsilon chain of Thermobifida fusca (strain YX).